The primary structure comprises 154 residues: Transcriptional repressor NrdR (154 aa).

A zinc finger spans residues 3-34; the sequence is CPFCGANDTKVIDSRLVAEGEQVRRRRECVAC. In terms of domain architecture, ATP-cone spans 49–139; the sequence is PRLIKQDGTR…VYRRFQDLDE (91 aa).

The protein belongs to the NrdR family. Zn(2+) is required as a cofactor.

In terms of biological role, negatively regulates transcription of bacterial ribonucleotide reductase nrd genes and operons by binding to NrdR-boxes. In Pseudomonas putida (strain W619), this protein is Transcriptional repressor NrdR.